The primary structure comprises 122 residues: MIQMQSVLDVADNTGARSVMCIKVLGGSHRRYAGVGDIIKVSIKDAAPRGRVKKGDVYNAVVVRTAKGVRRPDGSLVRFDGNAAVLLNNKLEPIGTRIFGPVTRELRTEKFMKIVSLAPEVL.

This sequence belongs to the universal ribosomal protein uL14 family. Part of the 50S ribosomal subunit. Forms a cluster with proteins L3 and L19. In the 70S ribosome, L14 and L19 interact and together make contacts with the 16S rRNA in bridges B5 and B8.

Its function is as follows. Binds to 23S rRNA. Forms part of two intersubunit bridges in the 70S ribosome. This chain is Large ribosomal subunit protein uL14, found in Thiobacillus denitrificans (strain ATCC 25259 / T1).